Reading from the N-terminus, the 88-residue chain is DNA-directed RNA polymerase subunit omega (88 aa).

The protein belongs to the RNA polymerase subunit omega family. As to quaternary structure, the RNAP catalytic core consists of 2 alpha, 1 beta, 1 beta' and 1 omega subunit. When a sigma factor is associated with the core the holoenzyme is formed, which can initiate transcription.

It catalyses the reaction RNA(n) + a ribonucleoside 5'-triphosphate = RNA(n+1) + diphosphate. Promotes RNA polymerase assembly. Latches the N- and C-terminal regions of the beta' subunit thereby facilitating its interaction with the beta and alpha subunits. In Clostridioides difficile (strain 630) (Peptoclostridium difficile), this protein is DNA-directed RNA polymerase subunit omega.